Reading from the N-terminus, the 143-residue chain is Transcriptional regulator MraZ (143 aa).

2 SpoVT-AbrB domains span residues 5-47 (EYFH…PVSA) and 76-119 (ASNQ…DKEK).

The protein belongs to the MraZ family. Forms oligomers.

It localises to the cytoplasm. Its subcellular location is the nucleoid. The protein is Transcriptional regulator MraZ of Finegoldia magna (strain ATCC 29328 / DSM 20472 / WAL 2508) (Peptostreptococcus magnus).